Reading from the N-terminus, the 612-residue chain is MELAMDNSYAFNQRSTCNGIPSEKKNNFLVSEDHGQKILSVLQNFREQNVFYDFKIIMKDEIIPCHRCVLAACSDFFRAMFEVNMKERDDGSVTITNLSSKAVKAFLDYAYTGKTKITDDNVEMFFQLSSFLQVSFLSKACSDFLIKSINLVNCLQLLSISDSYGSTSLFDHALHFVQHHFSLLFKSSDFLEMNFGVLQKCLESDELNVPEEEMVLKVVLSWTKHNLESRQKYLPHLIEKVRLHQLSEETLQDCLFNEESLLKSTNCFDIIMDAIKCVQGSGGLFPDARPSTTEKYIFIHKTEENGENQYTFCYNIKSDSWKILPQSHLIDLPGSSLSSYGEKIFLTGGCKGKCCRTVRLHIAESYHDATDQTWCYCPVKNDFFLVSTMKTPRTMHTSVMALDRLFVIGGKTRGSRDIKSLLDVESYNPLSKEWISVSPLPRGIYYPEASTCQNVIYVLGSEVEITDAFNPSLDCFFKYNATTDQWSELVAEFGQFFHATLIKAVPVNCTLYICDLSTYKVYSFCPDTCVWKGEGSFECAGFNAGAIGIEDKIYILGGDYAPDEITDEVQVYHSNRSEWEEVSPMPRALTEFYCQVIQFNKYRDPWFSNLCA.

One can recognise a BTB domain in the interval 52–119 (YDFKIIMKDE…AYTGKTKITD (68 aa)). Residues 154 to 254 (CLQLLSISDS…QLSEETLQDC (101 aa)) form the BACK domain. Kelch repeat units follow at residues 295 to 341 (KYIF…SSYG), 343 to 403 (KIFL…MALD), 404 to 454 (RLFV…TCQN), 456 to 506 (IYVL…KAVP), and 552 to 599 (KIYI…VIQF).

The sequence is that of Kelch repeat and BTB domain-containing protein 3 from Homo sapiens (Human).